We begin with the raw amino-acid sequence, 2104 residues long: Transmembrane matrix receptor MUP-4 (2104 aa).

Positions 1–15 (MRWVPLVLLPLIASA) are cleaved as a signal peptide. Topologically, residues 16–1860 (ATTYQHRQTY…FCETAPSNLP (1845 aa)) are extracellular. EGF-like domains lie at 71–110 (VVNECARPSLNACHKDAQCVDLAEGYTCRCNSGFADTSPD), 122–163 (TTNE…VSTS), and 175–213 (SVNECTNGEADCSNNADCFDRADGYECKCRPGFVDASPN). Intrachain disulfides connect Cys-75–Cys-89, Cys-83–Cys-98, Cys-126–Cys-142, Cys-136–Cys-151, Cys-179–Cys-192, and Cys-186–Cys-201. A WR1 domain is found at 220–265 (RVCNKPKAPEYYGQQSRQPQCSEGSGCGPNEECRFNTAGEKVCQCR). 3 EGF-like domains span residues 278 to 315 (VFSQCEQANECDRNAFCSNTYDGPKCQCKDGFLDVSPD), 327 to 360 (VRNECADGSHDCSHQAACQDTPTGYICSCNSNCI), and 377 to 416 (AANQCSDKSLNSCDENADCVQLPDGYTCKCFAGYVDVSSN). 7 cysteine pairs are disulfide-bonded: Cys-282–Cys-294, Cys-288–Cys-303, Cys-331–Cys-344, Cys-338–Cys-353, Cys-355–Cys-359, Cys-381–Cys-395, and Cys-389–Cys-404. The 176-residue stretch at 437 to 612 (DLVFLIDGSG…DLNTRLRSAI (176 aa)) folds into the VWFA domain. 2 N-linked (GlcNAc...) asparagine glycosylation sites follow: Asn-494 and Asn-556. 2 consecutive EGF-like domains span residues 728–772 (SNDE…NKCE) and 819–857 (LIDECAAGVADCDPNAKCTDTDESYICTCNEGFLDKSPE). 21 disulfides stabilise this stretch: Cys-732-Cys-746, Cys-740-Cys-756, Cys-758-Cys-771, Cys-823-Cys-836, Cys-830-Cys-845, Cys-873-Cys-886, Cys-880-Cys-895, Cys-923-Cys-937, Cys-931-Cys-946, Cys-972-Cys-985, Cys-979-Cys-995, Cys-1020-Cys-1034, Cys-1028-Cys-1046, Cys-1075-Cys-1089, Cys-1083-Cys-1098, Cys-1125-Cys-1139, Cys-1133-Cys-1148, Cys-1173-Cys-1187, Cys-1181-Cys-1196, Cys-1219-Cys-1233, and Cys-1227-Cys-1242. Residues 869 to 907 (QRNECLDGTHNCSMNADCIDLPDGFLCRCKEDFVDISPN) enclose the EGF-like 9; calcium-binding domain. N-linked (GlcNAc...) asparagine glycosylation is present at Asn-879. EGF-like domains follow at residues 919-958 (LVNECLITGGHNCHEHAICIDTRDSYKCQCKEGYVDHDEL), 968-1007 (LNQICESGKHECDKNARCVEKGANDYECVCNAGFIDKSPL), 1016-1058 (VEPI…VGAV), 1071-1110 (LVNECLSASLNSCDAAATCIDLDDGYTCKCPLGSKDESPV), 1121-1160 (LVNECNIPHLNNCSHFATCIDLEEGYECKCKPEYHDQKPE), 1169-1208 (IINECLAENLNDCSPNAMCIDKIDGYDCKCKAPFQDEMPS), and 1215-1254 (RFDECADPKDNDCDKHALCIDTDDSYTCQCKEGFFDEISD). Residue Asn-1037 is glycosylated (N-linked (GlcNAc...) asparagine). An N-linked (GlcNAc...) asparagine glycan is attached at Asn-1132. Asn-1271, Asn-1403, and Asn-1576 each carry an N-linked (GlcNAc...) asparagine glycan. SEA domains lie at 1322–1444 (PTTS…DDAD) and 1495–1620 (AVES…PEQL). 3 EGF-like domains span residues 1622–1658 (PFSNCYHSDCHPDAICKEVGKGYTCTCPDGFRDLNPS), 1669–1705 (GVNECEKPELNECSPHARCIDLDYLYKCECIRPYVNS), and 1717–1754 (SIDYCQDVNYCPLNSTCVNVDEQARCDCKPGFVDLRKS). 11 cysteine pairs are disulfide-bonded: Cys-1626–Cys-1637, Cys-1631–Cys-1646, Cys-1673–Cys-1687, Cys-1681–Cys-1696, Cys-1721–Cys-1733, Cys-1727–Cys-1742, Cys-1776–Cys-1789, Cys-1783–Cys-1798, Cys-1821–Cys-1830, Cys-1824–Cys-1841, and Cys-1843–Cys-1852. Residues Asn-1730 and Asn-1782 are each glycosylated (N-linked (GlcNAc...) asparagine). Residues 1772-1810 (DIDECALGLHNCSAAAICIDKKIGYECQCQEGYEDGNPS) enclose the EGF-like 20; calcium-binding domain. The region spanning 1817-1853 (AASLCGLCNGHGDCIHDALSSNVTCACLDGYTGQFCE) is the EGF-like 21 domain. The N-linked (GlcNAc...) asparagine glycan is linked to Asn-1838. A helical transmembrane segment spans residues 1861 to 1881 (LILMTLLALLFLLLTLLCCLY). Residues 1882–2104 (MCARCRCFGA…TTKAEEVNYF (223 aa)) lie on the Cytoplasmic side of the membrane. A compositionally biased stretch (low complexity) spans 2031–2040 (SGAMMSSASG). The disordered stretch occupies residues 2031-2104 (SGAMMSSASG…TTKAEEVNYF (74 aa)). Basic and acidic residues-rich tracts occupy residues 2062 to 2076 (VYDRTTRTNQSHDFE) and 2083 to 2104 (TGTERSKREFVTTTKAEEVNYF).

As to expression, abundant at hypodermal cell-matrix junctions overlying muscle of threefold embryos. Expression continues in body wall muscle in larvae and adults and is also detected in other regions where cells show mechanical attachment to the hypodermis including the inner surface of the pharynx, overlying anal and intestinal muscles, overlying vulval and uterine sex muscles, male tail muscle attachment zones and the six mechanosensory neurons (at protein level).

Its subcellular location is the cell junction. It localises to the hemidesmosome. The protein resides in the cytoplasm. The protein localises to the cytoskeleton. It is found in the cell membrane. In terms of biological role, required for junctional attachments between hypodermis and muscle, and between the apical epithelial surface and the cuticular matrix. Essential for enclosure of the embryo by the hypodermis, hypodermal integrity, embryo elongation, and maintenance of hypodermal morphology in fully elongated embryos. The polypeptide is Transmembrane matrix receptor MUP-4 (Caenorhabditis elegans).